Here is a 55-residue protein sequence, read N- to C-terminus: Large ribosomal subunit protein bL33 (55 aa).

This sequence belongs to the bacterial ribosomal protein bL33 family.

The sequence is that of Large ribosomal subunit protein bL33 from Bartonella henselae (strain ATCC 49882 / DSM 28221 / CCUG 30454 / Houston 1) (Rochalimaea henselae).